Here is a 207-residue protein sequence, read N- to C-terminus: Protein Nef (207 aa).

A lipid anchor (N-myristoyl glycine; by host) is attached at Gly-2. Ser-6 bears the Phosphoserine; by host mark. Residues 62-66 (EEDSE) form an acidic; interacts with host PACS1 and PACS2; stabilizes the interaction of NEF/MHC-I with host AP1M1; necessary for MHC-I internalization region. The segment at 70-79 (PVRPQVPLRP) is SH3-binding; interaction with Src family tyrosine kinases. The PxxP; stabilizes the interaction of NEF/MHC-I with host AP1M1; necessary for MHC-I internalization motif lies at 73 to 76 (PQVP). The interval 109–125 (EILDLWVYNTQGYFPDW) is mediates dimerization, Nef-PTE1 interaction. Residues 149–181 (MDPAEVEEANKGENNSLLHPICQHGMEDEDREV) form a binding to ATP6V1H region. Residues 165 to 166 (LL) carry the Dileucine internalization motif; necessary for CD4 internalization motif. The Diacidic; necessary for CD4 internalization signature appears at 175–176 (ED).

This sequence belongs to the lentivirus primate group Nef protein family. As to quaternary structure, monomer; cytosolic form. Homodimer; membrane bound form. Interacts with Nef associated p21-activated kinase (PAK2); this interaction activates PAK2. Associates with the Nef-MHC-I-AP1 complex; this complex is required for MHC-I internalization. Interacts (via C-terminus) with host PI3-kinase. Interacts with host PACS1; this interaction seems to be weak. Interacts with host PACS2. Interacts with host LCK and MAPK3; these interactions inhibit the kinase activity of the latter. Interacts with host ATP6V1H; this interaction may play a role in CD4 endocytosis. Associates with the CD4-Nef-AP2 complex; this complex is required for CD4 internalization. Interacts with host AP2 subunit alpha and AP2 subunit sigma2. Interacts with TCR-zeta chain; this interaction up-regulates the Fas ligand (FasL) surface expression. Interacts with host HCK, LYN, and SRC; these interactions activate the Src family kinases. Interacts with MAP3K5; this interaction inhibits the Fas and TNFR-mediated death signals. Interacts with beta-COP and PTE1. Interacts with human RACK1; this increases Nef phosphorylation by PKC. Interacts with TP53; this interaction decreases the half-life of TP53, protecting the infected cell against p53-mediated apoptosis. Post-translationally, the virion-associated Nef proteins are cleaved by the viral protease to release the soluble C-terminal core protein. Nef is probably cleaved concomitantly with viral structural proteins on maturation of virus particles. In terms of processing, myristoylated. Phosphorylated on serine residues, probably by host PKCdelta and theta.

It localises to the host cell membrane. The protein localises to the virion. Its subcellular location is the secreted. The protein resides in the host Golgi apparatus membrane. Functionally, factor of infectivity and pathogenicity, required for optimal virus replication. Alters numerous pathways of T-lymphocyte function and down-regulates immunity surface molecules in order to evade host defense and increase viral infectivity. Alters the functionality of other immunity cells, like dendritic cells, monocytes/macrophages and NK cells. In infected CD4(+) T-lymphocytes, down-regulates the surface MHC-I, mature MHC-II, CD4, CD28, CCR5 and CXCR4 molecules. Mediates internalization and degradation of host CD4 through the interaction of with the cytoplasmic tail of CD4, the recruitment of AP-2 (clathrin adapter protein complex 2), internalization through clathrin coated pits, and subsequent transport to endosomes and lysosomes for degradation. Diverts host MHC-I molecules to the trans-Golgi network-associated endosomal compartments by an endocytic pathway to finally target them for degradation. MHC-I down-regulation may involve AP-1 (clathrin adapter protein complex 1) or possibly Src family kinase-ZAP70/Syk-PI3K cascade recruited by PACS2. In consequence infected cells are masked for immune recognition by cytotoxic T-lymphocytes. Decreasing the number of immune receptors also prevents reinfection by more HIV particles (superinfection). Down-regulates host SERINC3 and SERINC5 thereby excluding these proteins from the viral particles. Virion infectivity is drastically higher when SERINC3 or SERINC5 are excluded from the viral envelope, because these host antiviral proteins impair the membrane fusion event necessary for subsequent virion penetration. In terms of biological role, bypasses host T-cell signaling by inducing a transcriptional program nearly identical to that of anti-CD3 cell activation. Interaction with TCR-zeta chain up-regulates the Fas ligand (FasL). Increasing surface FasL molecules and decreasing surface MHC-I molecules on infected CD4(+) cells send attacking cytotoxic CD8+ T-lymphocytes into apoptosis. Its function is as follows. Plays a role in optimizing the host cell environment for viral replication without causing cell death by apoptosis. Protects the infected cells from apoptosis in order to keep them alive until the next virus generation is ready to strike. Inhibits the Fas and TNFR-mediated death signals by blocking MAP3K5/ASK1. Decreases the half-life of TP53, protecting the infected cell against p53-mediated apoptosis. Inhibits the apoptotic signals regulated by the Bcl-2 family proteins through the formation of a Nef/PI3-kinase/PAK2 complex that leads to activation of PAK2 and induces phosphorylation of host BAD. Functionally, extracellular Nef protein targets CD4(+) T-lymphocytes for apoptosis by interacting with CXCR4 surface receptors. This Homo sapiens (Human) protein is Protein Nef.